The primary structure comprises 66 residues: Large ribosomal subunit protein bL33c (66 aa).

Belongs to the bacterial ribosomal protein bL33 family.

It localises to the plastid. Its subcellular location is the chloroplast. This is Large ribosomal subunit protein bL33c from Acorus calamus (Sweet flag).